Reading from the N-terminus, the 123-residue chain is Small ribosomal subunit protein uS12 (123 aa).

At Asp-89 the chain carries 3-methylthioaspartic acid.

Belongs to the universal ribosomal protein uS12 family. In terms of assembly, part of the 30S ribosomal subunit. Contacts proteins S8 and S17. May interact with IF1 in the 30S initiation complex.

Its function is as follows. With S4 and S5 plays an important role in translational accuracy. Functionally, interacts with and stabilizes bases of the 16S rRNA that are involved in tRNA selection in the A site and with the mRNA backbone. Located at the interface of the 30S and 50S subunits, it traverses the body of the 30S subunit contacting proteins on the other side and probably holding the rRNA structure together. The combined cluster of proteins S8, S12 and S17 appears to hold together the shoulder and platform of the 30S subunit. The polypeptide is Small ribosomal subunit protein uS12 (Geotalea uraniireducens (strain Rf4) (Geobacter uraniireducens)).